The primary structure comprises 185 residues: Elongation factor P (185 aa).

This sequence belongs to the elongation factor P family.

It is found in the cytoplasm. The protein operates within protein biosynthesis; polypeptide chain elongation. Involved in peptide bond synthesis. Stimulates efficient translation and peptide-bond synthesis on native or reconstituted 70S ribosomes in vitro. Probably functions indirectly by altering the affinity of the ribosome for aminoacyl-tRNA, thus increasing their reactivity as acceptors for peptidyl transferase. The sequence is that of Elongation factor P from Mesoplasma florum (strain ATCC 33453 / NBRC 100688 / NCTC 11704 / L1) (Acholeplasma florum).